A 106-amino-acid chain; its full sequence is Iron-sulfur cluster assembly protein CyaY (106 aa).

This sequence belongs to the frataxin family.

Its function is as follows. Involved in iron-sulfur (Fe-S) cluster assembly. May act as a regulator of Fe-S biogenesis. The polypeptide is Iron-sulfur cluster assembly protein CyaY (Dickeya chrysanthemi (Pectobacterium chrysanthemi)).